A 476-amino-acid chain; its full sequence is Neuropeptide-like precursor 1 (476 aa).

The N-terminal stretch at 1-34 (MNDAGASIGRHRGCLLLFVALAVAFSSYVEQVES) is a signal peptide. A Valine amide modification is found at valine 133. Propeptides lie at residues 160–232 (DEAT…NSYF) and 259–476 (YVMP…RKNQ). 2 disordered regions span residues 275-298 (QNDI…DGEV) and 360-385 (PEVE…SHPT). Acidic residues predominate over residues 286-297 (DDDDDDDDDDGE).

Neuropeptide-like precursor 1-1: Expressed in antennal lobe (AL), corpora cardiaca (CC), corpora allata (CA) and gnathal ganglion (GNG) (at protein level). Expression in AL detected in all animals, in GNG in most animals, expression in CC and CA in few animals (at protein level). Neuropeptide-like precursor 1-2: Expressed in antennal lobe (AL), corpora cardiaca (CC), corpora allata (CA) and gnathal ganglion (GNG) (at protein level). Expression in AL detected in all animals, in GNG in some animals, expression in CC and CA in few animals (at protein level). Neuropeptide-like precursor 1-3: Not expressed in antennal lobe (AL), corpora cardiaca (CC), corpora allata (CA) and gnathal ganglion (GNG) (at protein level). Neuropeptide-like precursor 1-4: Expressed in antennal lobe (AL) and gnathal ganglion (GNG) (at protein level). Expression in AL detected in most animals, in GNG in some animals (at protein level). Not expressed in CC and CA (at protein level). YRVamide: Expressed in antennal lobe (AL), corpora cardiaca (CC), corpora allata (CA) and gnathal ganglion (GNG) (at protein level). Expression in AL and GNG detected in most animals, expression in CC and CA in few animals (at protein level). Extended YRVamide: Expressed in antennal lobe (AL) and gnathal ganglion (GNG) (at protein level). Expression in AL detected in most animals, in GNG in some animals (at protein level). Not expressed in corpora cardiaca (CC) and corpora allata (CA) (at protein level). Neuropeptide-like precursor 1-6: Expressed in antennal lobe (AL), corpora cardiaca (CC), corpora allata (CA) and gnathal ganglion (GNG) (at protein level). Expression in GNG detected in all animals, expression in AL in most animals, in CC and CA in few animals (at protein level). Neuropeptide-like precursor 1-6(1-11): Expressed in antennal lobe (AL) and gnathal ganglion (GNG) in most animals (at protein level). Not expressed in corpora cardiaca (CC) and corpora allata (CA) (at protein level). Neuropeptide-like precursor 1-9: Expressed in antennal lobe (AL) and gnathal ganglion (GNG) (at protein level). Expression in AL detected in all animals in GNG in most (at protein level). Not expressed in corpora cardiaca (CC) and corpora allata (CA) (at protein level).

The protein resides in the secreted. The polypeptide is Neuropeptide-like precursor 1 (Agrotis ipsilon (Black cutworm moth)).